The following is a 133-amino-acid chain: Phosphoribosyl-AMP cyclohydrolase (133 aa).

D77 serves as a coordination point for Mg(2+). C78 lines the Zn(2+) pocket. The Mg(2+) site is built by D79 and D81. Zn(2+)-binding residues include C95 and C102.

It belongs to the PRA-CH family. As to quaternary structure, homodimer. Mg(2+) serves as cofactor. The cofactor is Zn(2+).

It localises to the cytoplasm. The enzyme catalyses 1-(5-phospho-beta-D-ribosyl)-5'-AMP + H2O = 1-(5-phospho-beta-D-ribosyl)-5-[(5-phospho-beta-D-ribosylamino)methylideneamino]imidazole-4-carboxamide. It participates in amino-acid biosynthesis; L-histidine biosynthesis; L-histidine from 5-phospho-alpha-D-ribose 1-diphosphate: step 3/9. Functionally, catalyzes the hydrolysis of the adenine ring of phosphoribosyl-AMP. In Thiobacillus denitrificans (strain ATCC 25259 / T1), this protein is Phosphoribosyl-AMP cyclohydrolase.